The sequence spans 350 residues: Nuclear pore complex-interacting protein family member A1 (350 aa).

The tract at residues 306–325 (KTPPECLLTPLPPSAPPSVD) is disordered.

Belongs to the NPIP family. May associate with the nuclear pore complex. Widely expressed.

It localises to the nucleus. Its subcellular location is the nuclear pore complex. It is found in the nucleus membrane. This chain is Nuclear pore complex-interacting protein family member A1 (NPIPA1), found in Homo sapiens (Human).